Here is a 430-residue protein sequence, read N- to C-terminus: Trigger factor (430 aa).

Residues Gly163–Pro248 enclose the PPIase FKBP-type domain.

This sequence belongs to the FKBP-type PPIase family. Tig subfamily.

It is found in the cytoplasm. It carries out the reaction [protein]-peptidylproline (omega=180) = [protein]-peptidylproline (omega=0). Functionally, involved in protein export. Acts as a chaperone by maintaining the newly synthesized protein in an open conformation. Functions as a peptidyl-prolyl cis-trans isomerase. This is Trigger factor from Clostridium botulinum (strain Loch Maree / Type A3).